The primary structure comprises 399 residues: Probable 2-isopropylmalate synthase (399 aa).

The region spanning 20–272 (VRIFDTTLRD…RTGVNTKLLY (253 aa)) is the Pyruvate carboxyltransferase domain. The a divalent metal cation site is built by aspartate 29, histidine 210, histidine 212, and asparagine 246.

This sequence belongs to the alpha-IPM synthase/homocitrate synthase family. In terms of assembly, homodimer. A divalent metal cation is required as a cofactor.

It carries out the reaction 3-methyl-2-oxobutanoate + acetyl-CoA + H2O = (2S)-2-isopropylmalate + CoA + H(+). It functions in the pathway amino-acid biosynthesis; L-leucine biosynthesis; L-leucine from 3-methyl-2-oxobutanoate: step 1/4. Catalyzes the condensation of the acetyl group of acetyl-CoA with 3-methyl-2-oxobutanoate (2-oxoisovalerate) to form 3-carboxy-3-hydroxy-4-methylpentanoate (2-isopropylmalate). The protein is Probable 2-isopropylmalate synthase (leuA) of Ignicoccus hospitalis (strain KIN4/I / DSM 18386 / JCM 14125).